The chain runs to 1004 residues: 2-oxoglutarate dehydrogenase E1 component (1004 aa).

This sequence belongs to the alpha-ketoglutarate dehydrogenase family. As to quaternary structure, homodimer. Part of the 2-oxoglutarate dehydrogenase (OGDH) complex composed of E1 (2-oxoglutarate dehydrogenase), E2 (dihydrolipoamide succinyltransferase) and E3 (dihydrolipoamide dehydrogenase); the complex contains multiple copies of the three enzymatic components (E1, E2 and E3). Thiamine diphosphate is required as a cofactor.

The catalysed reaction is N(6)-[(R)-lipoyl]-L-lysyl-[protein] + 2-oxoglutarate + H(+) = N(6)-[(R)-S(8)-succinyldihydrolipoyl]-L-lysyl-[protein] + CO2. Its function is as follows. E1 component of the 2-oxoglutarate dehydrogenase (OGDH) complex which catalyzes the decarboxylation of 2-oxoglutarate, the first step in the conversion of 2-oxoglutarate to succinyl-CoA and CO(2). This Brucella canis (strain ATCC 23365 / NCTC 10854 / RM-666) protein is 2-oxoglutarate dehydrogenase E1 component.